The sequence spans 81 residues: Small cysteine-rich protein 1 1 (81 aa).

Positions Met-1–Ser-19 are cleaved as a signal peptide. The propeptide occupies Gln-20–Tyr-39.

This sequence belongs to the Cnidaria small cysteine-rich protein (SCRiP) family. alpha subfamily. In terms of processing, the basic myotoxic domain of rattlesnake crotamine toxins (with 6 Cys residues) has been detected in this protein. However, this protein contains 2 additional Cys at the C-terminal region. Hence, this protein may contain 4 disulfide bonds instead of the 3 suggested by the myotoxin domain.

It is found in the secreted. Its subcellular location is the nematocyst. Induces neurotoxic symptoms on zebrafish. Has also been claimed to be implied in calcification, but tests on homolog proteins suggest that proteins of this family have a neurotoxic function and not a calcification function. This Montipora capitata (Rice coral) protein is Small cysteine-rich protein 1 1.